A 200-amino-acid chain; its full sequence is Small ribosomal subunit protein uS4 (200 aa).

The segment at 22-43 (TGKELERRPYAPGQHGPTQRKK) is disordered. The S4 RNA-binding domain occupies 92 to 170 (QRLDNIVYRL…VPEYVTFDAE (79 aa)).

Belongs to the universal ribosomal protein uS4 family. Part of the 30S ribosomal subunit. Contacts protein S5. The interaction surface between S4 and S5 is involved in control of translational fidelity.

One of the primary rRNA binding proteins, it binds directly to 16S rRNA where it nucleates assembly of the body of the 30S subunit. Functionally, with S5 and S12 plays an important role in translational accuracy. The polypeptide is Small ribosomal subunit protein uS4 (Listeria innocua serovar 6a (strain ATCC BAA-680 / CLIP 11262)).